The primary structure comprises 117 residues: UPF0375 protein Y45F10C.2 (117 aa).

Residues 1-20 form the signal peptide; the sequence is MNSFVSTVLLLSVTIALVSG.

It belongs to the UPF0375 family. As to expression, expressed in the uterine epithelium.

The protein resides in the secreted. Functionally, negatively regulates the egg-laying rate by promoting retention of fertilized eggs. The polypeptide is UPF0375 protein Y45F10C.2 (Caenorhabditis elegans).